We begin with the raw amino-acid sequence, 523 residues long: 2-isopropylmalate synthase (523 aa).

The region spanning 12–274 is the Pyruvate carboxyltransferase domain; sequence VVIFDTTLRD…WNKIDTTQLT (263 aa). Residues Asp-21, His-209, His-211, and Asn-245 each coordinate Mn(2+). A regulatory domain region spans residues 398–523; it reads KLLSLSVIAG…AQGAAAAAAS (126 aa).

It belongs to the alpha-IPM synthase/homocitrate synthase family. LeuA type 1 subfamily. In terms of assembly, homodimer. Requires Mn(2+) as cofactor.

The protein localises to the cytoplasm. It catalyses the reaction 3-methyl-2-oxobutanoate + acetyl-CoA + H2O = (2S)-2-isopropylmalate + CoA + H(+). It participates in amino-acid biosynthesis; L-leucine biosynthesis; L-leucine from 3-methyl-2-oxobutanoate: step 1/4. In terms of biological role, catalyzes the condensation of the acetyl group of acetyl-CoA with 3-methyl-2-oxobutanoate (2-ketoisovalerate) to form 3-carboxy-3-hydroxy-4-methylpentanoate (2-isopropylmalate). This is 2-isopropylmalate synthase from Bradyrhizobium sp. (strain BTAi1 / ATCC BAA-1182).